A 363-amino-acid chain; its full sequence is UDP-N-acetylglucosamine--N-acetylmuramyl-(pentapeptide) pyrophosphoryl-undecaprenol N-acetylglucosamine transferase (363 aa).

Residues 7-9 (TGG), N125, S196, I251, and Q296 contribute to the UDP-N-acetyl-alpha-D-glucosamine site.

Belongs to the glycosyltransferase 28 family. MurG subfamily.

It localises to the cell membrane. It catalyses the reaction Mur2Ac(oyl-L-Ala-gamma-D-Glu-L-Lys-D-Ala-D-Ala)-di-trans,octa-cis-undecaprenyl diphosphate + UDP-N-acetyl-alpha-D-glucosamine = beta-D-GlcNAc-(1-&gt;4)-Mur2Ac(oyl-L-Ala-gamma-D-Glu-L-Lys-D-Ala-D-Ala)-di-trans,octa-cis-undecaprenyl diphosphate + UDP + H(+). It functions in the pathway cell wall biogenesis; peptidoglycan biosynthesis. Its function is as follows. Cell wall formation. Catalyzes the transfer of a GlcNAc subunit on undecaprenyl-pyrophosphoryl-MurNAc-pentapeptide (lipid intermediate I) to form undecaprenyl-pyrophosphoryl-MurNAc-(pentapeptide)GlcNAc (lipid intermediate II). The chain is UDP-N-acetylglucosamine--N-acetylmuramyl-(pentapeptide) pyrophosphoryl-undecaprenol N-acetylglucosamine transferase from Latilactobacillus sakei subsp. sakei (strain 23K) (Lactobacillus sakei subsp. sakei).